The primary structure comprises 571 residues: Ferroportin (571 aa).

Residues M1–S23 are Cytoplasmic-facing. A helical transmembrane segment spans residues A24–L53. Residues D39 and H43 each contribute to the Fe cation site. Topologically, residues Y54–S57 are extracellular. A helical transmembrane segment spans residues L58–D84. Residues K85–A87 lie on the Cytoplasmic side of the membrane. The helical transmembrane segment at R88–H118 threads the bilayer. Residues E119–G126 lie on the Extracellular side of the membrane. A helical transmembrane segment spans residues W127–V162. Topologically, residues A163 to G164 are cytoplasmic. Residues E165–I195 traverse the membrane as a helical segment. Residues M196 to V202 are Extracellular-facing. A helical transmembrane segment spans residues I203–K229. The Cytoplasmic segment spans residues T230–P306. A helical transmembrane segment spans residues V307–Y333. C326 is a binding site for Fe cation. The Extracellular segment spans residues T334–S338. The helical transmembrane segment at G339–K366 threads the bilayer. Residues C367–G368 are Cytoplasmic-facing. Residues L369–V391 form a helical membrane-spanning segment. The Extracellular segment spans residues F392–I453. N-linked (GlcNAc...) asparagine glycosylation occurs at N434. The helical transmembrane segment at S454–N483 threads the bilayer. Residues V484–E488 lie on the Cytoplasmic side of the membrane. Residues R489 to L513 traverse the membrane as a helical segment. H507 is a Fe cation binding site. Topologically, residues A514–N516 are extracellular. Residues P517–A542 traverse the membrane as a helical segment. The Cytoplasmic portion of the chain corresponds to Q543–V571.

Belongs to the ferroportin (FP) (TC 2.A.100) family. SLC40A subfamily. As to quaternary structure, identified in a complex with STOM. Interacts with HAMP; affinity of the peptide hormone HAMP for SLC40A1 increases by 80-fold in the presence of iron and the interaction promotes SLC40A1 ubiquitination and degradation. Part of a complex composed of SLC40A1/ferroportin, TF/transferrin and HEPH/hephaestin that transfers iron from cells to transferrin. Post-translationally, polyubiquitinated by RNF217; leading to proteasomal degradation. Under conditions of high systemic iron levels, both the hormone peptide hepcidin/HAMP and holo(iron bound)-transferrin/TF induce the ubiquitination, internalization and proteasomal degradation of SLC40A1 to control iron release from cells. As to expression, detected in erythrocytes (at protein level). Expressed in placenta, intestine, muscle and spleen. Highly expressed in mature red blood.

It localises to the cell membrane. Its subcellular location is the basolateral cell membrane. The catalysed reaction is Fe(2+)(in) = Fe(2+)(out). In terms of biological role, transports Fe(2+) from the inside of a cell to the outside of the cell, playing a key role for maintaining systemic iron homeostasis. Transports iron from intestinal, splenic, hepatic cells, macrophages and erythrocytes into the blood to provide iron to other tissues. Controls therefore dietary iron uptake, iron recycling by macrophages and erythrocytes, and release of iron stores in hepatocytes. When iron is in excess in serum, circulating HAMP/hepcidin levels increase resulting in a degradation of SLC40A1, thus limiting the iron efflux to plasma. The chain is Ferroportin from Homo sapiens (Human).